The sequence spans 109 residues: Sulredoxin (109 aa).

Residues 3 to 107 (WKRTISAKAL…IRDNNGWIEV (105 aa)) form the Rieske domain. [2Fe-2S] cluster contacts are provided by C43, H45, C62, and H65.

Homooligomeric. [2Fe-2S] cluster is required as a cofactor.

The protein resides in the cytoplasm. Functionally, not yet known. This is Sulredoxin (sdx) from Sulfurisphaera tokodaii (strain DSM 16993 / JCM 10545 / NBRC 100140 / 7) (Sulfolobus tokodaii).